The sequence spans 405 residues: Cytochrome P450 109 (405 aa).

Cysteine 351 provides a ligand contact to heme.

Belongs to the cytochrome P450 family. Requires heme as cofactor.

Functionally, cytochromes P450 are a group of heme-thiolate monooxygenases. They oxidize a variety of structurally unrelated compounds, including steroids, fatty acids, and xenobiotics. The polypeptide is Cytochrome P450 109 (cyp109) (Bacillus spizizenii (strain ATCC 23059 / NRRL B-14472 / W23) (Bacillus subtilis subsp. spizizenii)).